Consider the following 424-residue polypeptide: Enolase (424 aa).

Q165 is a (2R)-2-phosphoglycerate binding site. The active-site Proton donor is the E207. The Mg(2+) site is built by D244, E283, and D310. K335, R364, S365, and K386 together coordinate (2R)-2-phosphoglycerate. The active-site Proton acceptor is the K335.

It belongs to the enolase family. Mg(2+) serves as cofactor.

The protein resides in the cytoplasm. It is found in the secreted. It localises to the cell surface. The catalysed reaction is (2R)-2-phosphoglycerate = phosphoenolpyruvate + H2O. The protein operates within carbohydrate degradation; glycolysis; pyruvate from D-glyceraldehyde 3-phosphate: step 4/5. Catalyzes the reversible conversion of 2-phosphoglycerate (2-PG) into phosphoenolpyruvate (PEP). It is essential for the degradation of carbohydrates via glycolysis. This Chlamydia abortus (strain DSM 27085 / S26/3) (Chlamydophila abortus) protein is Enolase.